The following is a 660-amino-acid chain: Acetyl-coenzyme A synthetase (660 aa).

CoA-binding positions include 197 to 200 (RGGK) and T317. Residues 397-399 (GEP), 421-426 (DTFWQT), D512, and R528 contribute to the ATP site. Position 536 (S536) interacts with CoA. R539 lines the ATP pocket. The Mg(2+) site is built by V550 and V555. The residue at position 625 (K625) is an N6-acetyllysine.

Belongs to the ATP-dependent AMP-binding enzyme family. Mg(2+) serves as cofactor. Acetylated. Deacetylation by the SIR2-homolog deacetylase activates the enzyme.

The enzyme catalyses acetate + ATP + CoA = acetyl-CoA + AMP + diphosphate. Catalyzes the conversion of acetate into acetyl-CoA (AcCoA), an essential intermediate at the junction of anabolic and catabolic pathways. AcsA undergoes a two-step reaction. In the first half reaction, AcsA combines acetate with ATP to form acetyl-adenylate (AcAMP) intermediate. In the second half reaction, it can then transfer the acetyl group from AcAMP to the sulfhydryl group of CoA, forming the product AcCoA. This is Acetyl-coenzyme A synthetase from Cupriavidus metallidurans (strain ATCC 43123 / DSM 2839 / NBRC 102507 / CH34) (Ralstonia metallidurans).